A 404-amino-acid chain; its full sequence is Cysteine desulfurase IscS (404 aa).

Residues 75–76 (AT), Asn-155, Gln-183, and 203–205 (SAH) each bind pyridoxal 5'-phosphate. Lys-206 bears the N6-(pyridoxal phosphate)lysine mark. Thr-243 contributes to the pyridoxal 5'-phosphate binding site. Catalysis depends on Cys-328, which acts as the Cysteine persulfide intermediate. Position 328 (Cys-328) interacts with [2Fe-2S] cluster.

This sequence belongs to the class-V pyridoxal-phosphate-dependent aminotransferase family. NifS/IscS subfamily. Homodimer. Forms a heterotetramer with IscU, interacts with other sulfur acceptors. The cofactor is pyridoxal 5'-phosphate.

It is found in the cytoplasm. It carries out the reaction (sulfur carrier)-H + L-cysteine = (sulfur carrier)-SH + L-alanine. It functions in the pathway cofactor biosynthesis; iron-sulfur cluster biosynthesis. Master enzyme that delivers sulfur to a number of partners involved in Fe-S cluster assembly, tRNA modification or cofactor biosynthesis. Catalyzes the removal of elemental sulfur atoms from cysteine to produce alanine. Functions as a sulfur delivery protein for Fe-S cluster synthesis onto IscU, an Fe-S scaffold assembly protein, as well as other S acceptor proteins. The protein is Cysteine desulfurase IscS of Ruthia magnifica subsp. Calyptogena magnifica.